Reading from the N-terminus, the 543-residue chain is CTP synthase (543 aa).

The segment at 1 to 265 (MTRYIFVTGG…DDFVVERFGL (265 aa)) is amidoligase domain. Serine 13 provides a ligand contact to CTP. Position 13 (serine 13) interacts with UTP. ATP is bound by residues 14–19 (SLGKGI) and aspartate 71. Positions 71 and 139 each coordinate Mg(2+). CTP is bound by residues 146–148 (DIE), 186–191 (KTKPTQ), and lysine 222. UTP-binding positions include 186 to 191 (KTKPTQ) and lysine 222. Positions 290–541 (TIAMVGKYME…VKAALAQHQK (252 aa)) constitute a Glutamine amidotransferase type-1 domain. Glycine 351 provides a ligand contact to L-glutamine. The Nucleophile; for glutamine hydrolysis role is filled by cysteine 378. L-glutamine is bound by residues 379–382 (LGMQ), glutamate 402, and arginine 469. Residues histidine 514 and glutamate 516 contribute to the active site.

Belongs to the CTP synthase family. Homotetramer.

The catalysed reaction is UTP + L-glutamine + ATP + H2O = CTP + L-glutamate + ADP + phosphate + 2 H(+). The enzyme catalyses L-glutamine + H2O = L-glutamate + NH4(+). It catalyses the reaction UTP + NH4(+) + ATP = CTP + ADP + phosphate + 2 H(+). The protein operates within pyrimidine metabolism; CTP biosynthesis via de novo pathway; CTP from UDP: step 2/2. With respect to regulation, allosterically activated by GTP, when glutamine is the substrate; GTP has no effect on the reaction when ammonia is the substrate. The allosteric effector GTP functions by stabilizing the protein conformation that binds the tetrahedral intermediate(s) formed during glutamine hydrolysis. Inhibited by the product CTP, via allosteric rather than competitive inhibition. Functionally, catalyzes the ATP-dependent amination of UTP to CTP with either L-glutamine or ammonia as the source of nitrogen. Regulates intracellular CTP levels through interactions with the four ribonucleotide triphosphates. In Pseudomonas syringae pv. tomato (strain ATCC BAA-871 / DC3000), this protein is CTP synthase.